We begin with the raw amino-acid sequence, 360 residues long: GDSL esterase/lipase At1g58430 (360 aa).

The signal sequence occupies residues 1–23 (MWTSKTISFTLFITTTLLGSCNA). N-linked (GlcNAc...) asparagine glycosylation is present at N22. The Nucleophile role is filled by S42. Residues N104 and N326 are each glycosylated (N-linked (GlcNAc...) asparagine). Active-site residues include D334 and H337.

The protein belongs to the 'GDSL' lipolytic enzyme family.

The protein localises to the secreted. This Arabidopsis thaliana (Mouse-ear cress) protein is GDSL esterase/lipase At1g58430.